A 527-amino-acid polypeptide reads, in one-letter code: 2-isopropylmalate synthase (527 aa).

One can recognise a Pyruvate carboxyltransferase domain in the interval 18–280 (IRIFDTTLRD…QTNINSKRLV (263 aa)). Mn(2+) is bound by residues D27, H215, H217, and N251. Residues 405–527 (TLVDYEVTSG…ASDPGELPQP (123 aa)) form a regulatory domain region.

This sequence belongs to the alpha-IPM synthase/homocitrate synthase family. LeuA type 1 subfamily. In terms of assembly, homodimer. It depends on Mn(2+) as a cofactor.

It is found in the cytoplasm. The enzyme catalyses 3-methyl-2-oxobutanoate + acetyl-CoA + H2O = (2S)-2-isopropylmalate + CoA + H(+). It functions in the pathway amino-acid biosynthesis; L-leucine biosynthesis; L-leucine from 3-methyl-2-oxobutanoate: step 1/4. Functionally, catalyzes the condensation of the acetyl group of acetyl-CoA with 3-methyl-2-oxobutanoate (2-ketoisovalerate) to form 3-carboxy-3-hydroxy-4-methylpentanoate (2-isopropylmalate). The sequence is that of 2-isopropylmalate synthase from Rhodopirellula baltica (strain DSM 10527 / NCIMB 13988 / SH1).